The chain runs to 69 residues: Nodulin-3 (69 aa).

Residues 1-24 form the signal peptide; it reads MAKILKFVFAIILFFSLFLLSMEA.

The protein is Nodulin-3 (ENOD3) of Pisum sativum (Garden pea).